Consider the following 468-residue polypeptide: MAFINLVPKLYQSVIEDVIEGVRDLFAEEGIEEQVLKDLKKLWETKVLQSKATEDFFRNSTQVPLLTLQLPHALPPALQPEASLLIPAGRTLPSFTPEDLNTANCGANFAFAGYPIHVPAGMAFQTASGHLYKVNVPVMVTQTSGRTEILQHPFQQVLQQLGQPLVIQTTVPTLHPCSLQAATEKSLRMEAVLQPPPILHPPPVDRTHVENAASDRRLLPGNELRPQESSPYLSLPGVGFPPQAALTESSLEPVLGVSASLTQNLHSDPFSQGPPGPLHHHLLESQLQSLKDSIYGCDSTKQLRKAEEPSSLRVSEKNCTSERDLNIRVTDDDINEIIQIDGTGDNSSTEEMGSIRDADENEFPGIIDAGDLNVLEEVDSVSNEDSTANSSDNEDHQINAPEEDPLNSGDDVSEQDVPDLFDTENVIVCQYDKIHRSKNRWKFYLKDGVMCFGGRDYVFAKAIGEAEW.

Disordered regions lie at residues 215 to 236 and 379 to 416; these read DRRLLPGNELRPQESSPYLSLP and DSVSNEDSTANSSDNEDHQINAPEEDPLNSGDDVSEQD. Over residues 380-391 the composition is skewed to polar residues; the sequence is SVSNEDSTANSS. Acidic residues predominate over residues 401–416; that stretch reads PEEDPLNSGDDVSEQD.

It belongs to the TFIIA subunit 1 family. In terms of tissue distribution, testis specific. Expressed in pachytene spermatocytes and haploid spermatids.

The protein resides in the nucleus. Its function is as follows. May function as a testis specific transcription factor. Binds DNA in conjunction with GTF2A2 and TBP (the TATA-binding protein) and together with GTF2A2, allows mRNA transcription. This is TFIIA-alpha and beta-like factor (Gtf2a1l) from Mus musculus (Mouse).